A 712-amino-acid chain; its full sequence is MSQEKQVFSIDLAGRQLTVETGQLAKQANGAVLVRYGDTAVLSTATASKEAKNVDFFPLTVNYEERLYAVGKIPGGFIKREGRPSEKAILASRLIDRPIRPLFADGFRNEVQVVSIVMSVDQDCSSEMAAMLGSSLALSISDIPFEGPIAGATVGRINGEFVINPTVEQQEQSDIHLVVAGTKDAINMVEAGADQVPEETMLEAIMFGHDEIKRLIAFQEEIVQAVGKEKSEVKLYEVDADLNQAVREMAEKDMHSAIQVHEKHAREDAINEVKKRVIEHYEAEEADADTLGQVNEILYKIVKEEVRRLITVEKIRPDGRKGDEIRPLASEVGILSRTHGSGLFTRGQTQALSICTLGALGDVQILDGLGVEESKRFMHHYNFPSFSVGETRPMRGPGRREIGHGALGERALEPVIPSEKDFPYTVRLVSEVLESNGSTSQASICGSTLAMMDAGVPLKAPVAGIAMGLVKSGEHYTILSDIQGMEDHLGDMDFKVAGTAQGVTALQMDIKIDGLSREILEEALQQAKIGRVHILNHMLSVIAEPRTELSAYAPKIITMTINPDKIRDVIGPSGKQINKIIEETGVKIDIEQDGTVFISSINQEMNDKAKKIIEDIVREVQVGEIYEGKVKRVEKFGAFVELFSGKDGLVHISELALERVGKVEDVVKIGDVITVKVIEIDKQGRVNLSRKVLLKEEQEKEAAKEEDKQEQQ.

Positions 487 and 493 each coordinate Mg(2+). In terms of domain architecture, KH spans 554-613; that stretch reads PKIITMTINPDKIRDVIGPSGKQINKIIEETGVKIDIEQDGTVFISSINQEMNDKAKKII. Residues 623–691 form the S1 motif domain; sequence GEIYEGKVKR…KQGRVNLSRK (69 aa).

This sequence belongs to the polyribonucleotide nucleotidyltransferase family. The cofactor is Mg(2+).

It localises to the cytoplasm. It catalyses the reaction RNA(n+1) + phosphate = RNA(n) + a ribonucleoside 5'-diphosphate. Involved in mRNA degradation. Catalyzes the phosphorolysis of single-stranded polyribonucleotides processively in the 3'- to 5'-direction. This is Polyribonucleotide nucleotidyltransferase from Bacillus cereus (strain G9842).